The primary structure comprises 406 residues: Glucose-1-phosphate adenylyltransferase (406 aa).

Alpha-D-glucose 1-phosphate-binding positions include Y100, G165, 181–182, and S199; that span reads EK.

The protein belongs to the bacterial/plant glucose-1-phosphate adenylyltransferase family. Homotetramer.

It catalyses the reaction alpha-D-glucose 1-phosphate + ATP + H(+) = ADP-alpha-D-glucose + diphosphate. It functions in the pathway glycan biosynthesis; glycogen biosynthesis. Functionally, involved in the biosynthesis of ADP-glucose, a building block required for the elongation reactions to produce glycogen. Catalyzes the reaction between ATP and alpha-D-glucose 1-phosphate (G1P) to produce pyrophosphate and ADP-Glc. The chain is Glucose-1-phosphate adenylyltransferase from Streptomyces avermitilis (strain ATCC 31267 / DSM 46492 / JCM 5070 / NBRC 14893 / NCIMB 12804 / NRRL 8165 / MA-4680).